Reading from the N-terminus, the 381-residue chain is Terpene cyclase ATR13 (381 aa).

It belongs to the terpene synthase family.

It participates in mycotoxin biosynthesis. Terpene cyclase; part of the core atranone cluster (CAC) which products are predicted to catalyze most or all steps of mycotoxin atranone synthesis, starting from geranylgeranyl pyrophosphate (GGPP). The initial cyclization of GGPP to dolabellane is probably performed by the terpene cyclase ATR13. The Baeyer-Villiger oxidation near the end of the atranone synthesis, which converts atranones D and E to atranones F and G is predicted to be catalyzed by the monooxygenase ATR8. Of the CAC's other predicted gene products, the reducing PKS ATR6 might synthesize a polyketide chain. This polyketide is probably transferred onto the atranone backbone by the polyketide transferase ATR5. Other predicted CAC products include 4 oxygenases (ATR2, ATR3, ATR4, and ATR14), 3 short-chain reductases (ATR7, ATR9, and ATR10), and a methyltransferase (ATR12). These may all be involved in the various steps of atranone biosynthesis, although their specific roles must await experimental determination. This Stachybotrys chlorohalonatus (strain IBT 40285) protein is Terpene cyclase ATR13.